We begin with the raw amino-acid sequence, 115 residues long: Large ribosomal subunit protein bL19 (115 aa).

The protein belongs to the bacterial ribosomal protein bL19 family.

Its function is as follows. This protein is located at the 30S-50S ribosomal subunit interface and may play a role in the structure and function of the aminoacyl-tRNA binding site. The sequence is that of Large ribosomal subunit protein bL19 from Brevibacillus brevis (strain 47 / JCM 6285 / NBRC 100599).